The primary structure comprises 205 residues: Protein-L-isoaspartate O-methyltransferase (205 aa).

S56 is an active-site residue.

It belongs to the methyltransferase superfamily. L-isoaspartyl/D-aspartyl protein methyltransferase family.

It localises to the cytoplasm. The enzyme catalyses [protein]-L-isoaspartate + S-adenosyl-L-methionine = [protein]-L-isoaspartate alpha-methyl ester + S-adenosyl-L-homocysteine. Its function is as follows. Catalyzes the methyl esterification of L-isoaspartyl residues in peptides and proteins that result from spontaneous decomposition of normal L-aspartyl and L-asparaginyl residues. It plays a role in the repair and/or degradation of damaged proteins. This Pyrobaculum arsenaticum (strain DSM 13514 / JCM 11321 / PZ6) protein is Protein-L-isoaspartate O-methyltransferase.